The following is a 406-amino-acid chain: Imidazolonepropionase (406 aa).

Residues histidine 72 and histidine 74 each coordinate Fe(3+). Histidine 72 and histidine 74 together coordinate Zn(2+). 4-imidazolone-5-propanoate is bound by residues arginine 81, tyrosine 144, and histidine 177. Tyrosine 144 lines the N-formimidoyl-L-glutamate pocket. Position 242 (histidine 242) interacts with Fe(3+). Histidine 242 is a Zn(2+) binding site. Glutamine 245 is a binding site for 4-imidazolone-5-propanoate. A Fe(3+)-binding site is contributed by aspartate 317. Residue aspartate 317 coordinates Zn(2+). N-formimidoyl-L-glutamate-binding residues include asparagine 319 and glycine 321. 4-imidazolone-5-propanoate is bound at residue threonine 322.

The protein belongs to the metallo-dependent hydrolases superfamily. HutI family. Zn(2+) serves as cofactor. Fe(3+) is required as a cofactor.

It localises to the cytoplasm. The catalysed reaction is 4-imidazolone-5-propanoate + H2O = N-formimidoyl-L-glutamate. It participates in amino-acid degradation; L-histidine degradation into L-glutamate; N-formimidoyl-L-glutamate from L-histidine: step 3/3. Catalyzes the hydrolytic cleavage of the carbon-nitrogen bond in imidazolone-5-propanoate to yield N-formimidoyl-L-glutamate. It is the third step in the universal histidine degradation pathway. This is Imidazolonepropionase from Yersinia pseudotuberculosis serotype O:3 (strain YPIII).